The primary structure comprises 585 residues: Suppressor of mec-8 and unc-52 protein homolog 2 (585 aa).

The segment covering 1-14 has biased composition (basic residues); that stretch reads MKPSKSHHKEKTAR. 2 disordered regions span residues 1–52 and 219–324; these read MKPS…SSFH and KKKK…PRDK. A compositionally biased stretch (basic and acidic residues) spans 15–39; the sequence is RREEKLEESDNPKYRDRAKERRENQ. R-[ED] repeat units lie at residues 16–17, 29–30, 36–37, and 258–259; these read RE and RD. The span at 276-288 shows a compositional bias: basic and acidic residues; sequence LSTKQEEPPVART. R-[ED] repeat units lie at residues 322–323, 436–437, 445–446, 450–451, 540–541, and 542–543; these read RD and RE. The segment at 523 to 585 is disordered; it reads FQFGVKMQDG…EAQTPKRSKH (63 aa). Basic and acidic residues predominate over residues 530–548; the sequence is QDGRKTRKQNRDRDQKLNN. Position 579 is a phosphothreonine (Thr579).

Belongs to the RED family. In terms of assembly, component of the spliceosome. Interacts with SMU1. As to expression, highly expressed in seedlings at 7 days after germination, young flowers before anthesis and developing siliques. Expressed at lower levels in roots, expanding leaves, open flowers, dry seeds and inflorescences. Not detected in senescing leaves.

It localises to the nucleus. Auxiliary spliceosomal protein involved in splicing of specific pre-mRNAs that affect multiple aspects of development. The protein is Suppressor of mec-8 and unc-52 protein homolog 2 (SMU2) of Arabidopsis thaliana (Mouse-ear cress).